Consider the following 178-residue polypeptide: Disulfide bond formation protein B (178 aa).

Residues 1 to 14 (MLSFFKTLSTKRSA) are Cytoplasmic-facing. The helical transmembrane segment at 15-31 (WFLLFSSALLLEAIALY) threads the bilayer. Residues 32–49 (FQHGMGLAPCVMCIYERV) are Periplasmic-facing. Residues C41 and C44 are joined by a disulfide bond. A helical transmembrane segment spans residues 50-65 (AILGIAFSGLLGLLYP). At 66-72 (SSMLLRL) the chain is on the cytoplasmic side. The helical transmembrane segment at 73–90 (VALLIGLSSAIKGLMISI) threads the bilayer. Topologically, residues 91–145 (THLDLQLYPAPWKQCSAVAEFPETLPLDQWFPALFLPSGSCSEVTWQFLGFSMVQ) are periplasmic. An intrachain disulfide couples C105 to C131. The chain crosses the membrane as a helical span at residues 146-164 (WIVVIFALYTLLLALIFIS). At 165 to 177 (QVKRLKPKQRRLF) the chain is on the cytoplasmic side.

This sequence belongs to the DsbB family.

The protein localises to the cell inner membrane. Its function is as follows. Required for disulfide bond formation in some periplasmic proteins. Acts by oxidizing the DsbA protein. This chain is Disulfide bond formation protein B, found in Pasteurella multocida (strain Pm70).